The primary structure comprises 269 residues: Eukaryotic translation initiation factor 3 subunit G-1 (269 aa).

The region spanning A188–P266 is the RRM domain.

Belongs to the eIF-3 subunit G family. In terms of assembly, component of the eukaryotic translation initiation factor 3 (eIF-3) complex. The eIF-3 complex interacts with pix.

The protein resides in the cytoplasm. Its function is as follows. RNA-binding component of the eukaryotic translation initiation factor 3 (eIF-3) complex, which is involved in protein synthesis of a specialized repertoire of mRNAs and, together with other initiation factors, stimulates binding of mRNA and methionyl-tRNAi to the 40S ribosome. The eIF-3 complex specifically targets and initiates translation of a subset of mRNAs involved in cell proliferation. This subunit can bind 18S rRNA. This chain is Eukaryotic translation initiation factor 3 subunit G-1, found in Drosophila sechellia (Fruit fly).